Reading from the N-terminus, the 100-residue chain is Small ribosomal subunit protein uS14c (100 aa).

The protein belongs to the universal ribosomal protein uS14 family. As to quaternary structure, part of the 30S ribosomal subunit.

It is found in the plastid. Its subcellular location is the chloroplast. In terms of biological role, binds 16S rRNA, required for the assembly of 30S particles. The sequence is that of Small ribosomal subunit protein uS14c from Eucalyptus globulus subsp. globulus (Tasmanian blue gum).